Reading from the N-terminus, the 174-residue chain is Myeloid-derived growth factor (174 aa).

An N-terminal signal peptide occupies residues 1 to 32; that stretch reads MAAPSGRRNGSGGANLWVSLLLAAAALRPVET.

It belongs to the MYDGF family.

It localises to the secreted. The protein resides in the endoplasmic reticulum-Golgi intermediate compartment. It is found in the endoplasmic reticulum. The protein localises to the golgi apparatus. Functionally, bone marrow-derived monocyte and paracrine-acting protein that promotes cardiac myocyte survival and adaptive angiogenesis for cardiac protection and/or repair after myocardial infarction (MI). Stimulates endothelial cell proliferation through a MAPK1/3-, STAT3- and CCND1-mediated signaling pathway. Inhibits cardiac myocyte apoptosis in a PI3K/AKT-dependent signaling pathway. The polypeptide is Myeloid-derived growth factor (Bos taurus (Bovine)).